A 186-amino-acid polypeptide reads, in one-letter code: CRS2-like protein, chloroplastic (186 aa).

The transit peptide at 1–49 (MAMTAASVFGSGGCLELLTSSKAMRGKLWTRLAPFISKRHASTSQTSLS) directs the protein to the chloroplast. TRNA is bound at residue Tyr73. His78 functions as the Proton acceptor in the catalytic mechanism. Residues Tyr123, Asn125, and Asn171 each contribute to the tRNA site.

The protein belongs to the PTH family.

It is found in the plastid. It localises to the chloroplast. The polypeptide is CRS2-like protein, chloroplastic (Oryza sativa subsp. japonica (Rice)).